The primary structure comprises 474 residues: L-arabinose isomerase (474 aa).

Mn(2+) is bound by residues glutamate 306, glutamate 331, histidine 348, and histidine 447.

The protein belongs to the arabinose isomerase family. Requires Mn(2+) as cofactor.

The enzyme catalyses beta-L-arabinopyranose = L-ribulose. The protein operates within carbohydrate degradation; L-arabinose degradation via L-ribulose; D-xylulose 5-phosphate from L-arabinose (bacterial route): step 1/3. Functionally, catalyzes the conversion of L-arabinose to L-ribulose. This Pediococcus pentosaceus (strain ATCC 25745 / CCUG 21536 / LMG 10740 / 183-1w) protein is L-arabinose isomerase.